The following is a 431-amino-acid chain: 3-phosphoshikimate 1-carboxyvinyltransferase (431 aa).

Residues K26, S27, and R31 each contribute to the 3-phosphoshikimate site. K26 lines the phosphoenolpyruvate pocket. 2 residues coordinate phosphoenolpyruvate: G99 and R127. Residues S170, S171, Q172, S199, E314, and H343 each contribute to the 3-phosphoshikimate site. Q172 contacts phosphoenolpyruvate. E314 (proton acceptor) is an active-site residue. Phosphoenolpyruvate contacts are provided by R347, R388, and K413.

Belongs to the EPSP synthase family. As to quaternary structure, monomer.

It is found in the cytoplasm. It carries out the reaction 3-phosphoshikimate + phosphoenolpyruvate = 5-O-(1-carboxyvinyl)-3-phosphoshikimate + phosphate. Its pathway is metabolic intermediate biosynthesis; chorismate biosynthesis; chorismate from D-erythrose 4-phosphate and phosphoenolpyruvate: step 6/7. Its function is as follows. Catalyzes the transfer of the enolpyruvyl moiety of phosphoenolpyruvate (PEP) to the 5-hydroxyl of shikimate-3-phosphate (S3P) to produce enolpyruvyl shikimate-3-phosphate and inorganic phosphate. The protein is 3-phosphoshikimate 1-carboxyvinyltransferase of Mycobacterium marinum (strain ATCC BAA-535 / M).